Here is a 190-residue protein sequence, read N- to C-terminus: Probable calcium-binding protein CML27 (190 aa).

EF-hand domains follow at residues 27-62 (LNAL…LGLG), 115-150 (DDEG…LGLP), and 153-188 (RNLA…ITVW). Ca(2+) is bound by residues D40, N42, D44, E46, E51, D128, D130, D132, E139, D166, D168, D170, R172, and E177.

Its function is as follows. Potential calcium sensor. The polypeptide is Probable calcium-binding protein CML27 (CML27) (Oryza sativa subsp. japonica (Rice)).